A 321-amino-acid chain; its full sequence is Lipoyl synthase (321 aa).

[4Fe-4S] cluster-binding residues include Cys68, Cys73, Cys79, Cys94, Cys98, Cys101, and Ser308. The Radical SAM core domain maps to Phe80–Thr297.

It belongs to the radical SAM superfamily. Lipoyl synthase family. [4Fe-4S] cluster is required as a cofactor.

The protein resides in the cytoplasm. It catalyses the reaction [[Fe-S] cluster scaffold protein carrying a second [4Fe-4S](2+) cluster] + N(6)-octanoyl-L-lysyl-[protein] + 2 oxidized [2Fe-2S]-[ferredoxin] + 2 S-adenosyl-L-methionine + 4 H(+) = [[Fe-S] cluster scaffold protein] + N(6)-[(R)-dihydrolipoyl]-L-lysyl-[protein] + 4 Fe(3+) + 2 hydrogen sulfide + 2 5'-deoxyadenosine + 2 L-methionine + 2 reduced [2Fe-2S]-[ferredoxin]. Its pathway is protein modification; protein lipoylation via endogenous pathway; protein N(6)-(lipoyl)lysine from octanoyl-[acyl-carrier-protein]: step 2/2. Its function is as follows. Catalyzes the radical-mediated insertion of two sulfur atoms into the C-6 and C-8 positions of the octanoyl moiety bound to the lipoyl domains of lipoate-dependent enzymes, thereby converting the octanoylated domains into lipoylated derivatives. This chain is Lipoyl synthase, found in Shewanella putrefaciens (strain CN-32 / ATCC BAA-453).